The primary structure comprises 384 residues: Probable endopolygalacturonase C (384 aa).

The signal sequence occupies residues 1–19 (MVRQLILISSLLAAVAVRA). A propeptide spanning residues 20–40 (APADPAHPMVTEAPDVNLVEK) is cleaved from the precursor. A disulfide bond links cysteine 45 and cysteine 63. PbH1 repeat units follow at residues 176 to 207 (STDLTMTDITVDNTDGDTDDLAANTDGFDIGE) and 208 to 229 (STYITITGAEIYNQDDCVAINS). Catalysis depends on aspartate 222, which acts as the Proton donor. Cysteines 224 and 240 form a disulfide. The active site involves histidine 244. 2 PbH1 repeats span residues 254 to 280 (RDDNTVKNVTFYDVNVLKSQQAIRIKT) and 288 to 310 (VSEVTYHEIAFSDATDYGIVIEQ). The N-linked (GlcNAc...) asparagine glycan is linked to asparagine 261. 2 disulfides stabilise this stretch: cysteine 349-cysteine 354 and cysteine 373-cysteine 382.

Belongs to the glycosyl hydrolase 28 family.

Its subcellular location is the secreted. The enzyme catalyses (1,4-alpha-D-galacturonosyl)n+m + H2O = (1,4-alpha-D-galacturonosyl)n + (1,4-alpha-D-galacturonosyl)m.. In terms of biological role, involved in maceration and soft-rotting of plant tissue. Hydrolyzes the 1,4-alpha glycosidic bonds of de-esterified pectate in the smooth region of the plant cell wall. This is Probable endopolygalacturonase C (pgaC) from Aspergillus niger (strain ATCC MYA-4892 / CBS 513.88 / FGSC A1513).